Reading from the N-terminus, the 216-residue chain is Cyclic AMP receptor protein (216 aa).

6 to 126 (LFHGLAPEEV…HNLAALLARR (121 aa)) is an a nucleoside 3',5'-cyclic phosphate binding site. Residues 75-78 (GEMS) and 85-86 (RS) contribute to the 3',5'-cyclic AMP site. The HTH crp-type domain maps to 140 to 206 (EEARNRVAYA…PGTVEVREAA (67 aa)). Residues 166 to 185 (HHELAALAGTSRETVSRVLH) constitute a DNA-binding region (H-T-H motif).

As to quaternary structure, homodimer.

Activates transcription. Positively regulates six promoters upstream of the TTHB186, TTHB147, TTHB178, TTHB159, TTHA0771 and TTHA0176 genes in a cAMP-dependent manner. Regulated genes include clustered regularly interspaced short palindromic repeat (CRISPR) associated (Cas) genes, and the genes encoding a putative transcriptional regulator, a protein containing the exonuclease III-like domain of DNA polymerase, a GCN5-related acetyltransferase homolog, and some T.thermophilus-specific proteins of unknown function. The consensus DNA-binding site of this transcriptional regulator is 5'-(CT)NNG(G/T)(G/T)C(A/C)N(A/T)NNTCACAN(G/C)(G/C)-3' in which N is G, A, T or C. The protein is Cyclic AMP receptor protein of Thermus thermophilus (strain ATCC 27634 / DSM 579 / HB8).